Here is a 356-residue protein sequence, read N- to C-terminus: Tyrosine recombinase XerS (356 aa).

Residues 16-121 (TMPWYILEYY…ALSSLYKYLT (106 aa)) enclose the Core-binding (CB) domain. The region spanning 169–354 (EFLQYIDREY…VNDEQKNALN (186 aa)) is the Tyr recombinase domain. Residues R210, K234, H306, R309, and H332 contribute to the active site. The O-(3'-phospho-DNA)-tyrosine intermediate role is filled by Y341.

Belongs to the 'phage' integrase family. XerS subfamily.

The protein resides in the cytoplasm. With respect to regulation, ftsK is required for recombination. Its function is as follows. Site-specific tyrosine recombinase, which acts by catalyzing the cutting and rejoining of the recombining DNA molecules. Essential to convert dimers of the bacterial chromosome into monomers to permit their segregation at cell division. The chain is Tyrosine recombinase XerS from Streptococcus gordonii (strain Challis / ATCC 35105 / BCRC 15272 / CH1 / DL1 / V288).